Here is a 168-residue protein sequence, read N- to C-terminus: Co-chaperone protein HscB homolog (168 aa).

Positions 5–77 (DYFSLFGLPS…MLRARYLCES (73 aa)) constitute a J domain.

This sequence belongs to the HscB family. Interacts with HscA and stimulates its ATPase activity.

Co-chaperone involved in the maturation of iron-sulfur cluster-containing proteins. Seems to help targeting proteins to be folded toward HscA. The chain is Co-chaperone protein HscB homolog from Bordetella avium (strain 197N).